A 306-amino-acid chain; its full sequence is Acetyl-coenzyme A carboxylase carboxyl transferase subunit beta (306 aa).

In terms of domain architecture, CoA carboxyltransferase N-terminal spans 25-294; it reads VWTKCDSCGQ…PQDPLPHEPR (270 aa). Zn(2+) contacts are provided by Cys-29, Cys-32, Cys-48, and Cys-51. A C4-type zinc finger spans residues 29–51; it reads CDSCGQVLYRAELERNLEVCPKC. The tract at residues 281-306 is disordered; sequence NRPQPQDPLPHEPRPDAVPEDHQDEV. Residues 289–306 are compositionally biased toward basic and acidic residues; the sequence is LPHEPRPDAVPEDHQDEV.

Belongs to the AccD/PCCB family. In terms of assembly, acetyl-CoA carboxylase is a heterohexamer composed of biotin carboxyl carrier protein (AccB), biotin carboxylase (AccC) and two subunits each of ACCase subunit alpha (AccA) and ACCase subunit beta (AccD). Zn(2+) serves as cofactor.

It localises to the cytoplasm. The catalysed reaction is N(6)-carboxybiotinyl-L-lysyl-[protein] + acetyl-CoA = N(6)-biotinyl-L-lysyl-[protein] + malonyl-CoA. The protein operates within lipid metabolism; malonyl-CoA biosynthesis; malonyl-CoA from acetyl-CoA: step 1/1. In terms of biological role, component of the acetyl coenzyme A carboxylase (ACC) complex. Biotin carboxylase (BC) catalyzes the carboxylation of biotin on its carrier protein (BCCP) and then the CO(2) group is transferred by the transcarboxylase to acetyl-CoA to form malonyl-CoA. The sequence is that of Acetyl-coenzyme A carboxylase carboxyl transferase subunit beta from Sodalis glossinidius (strain morsitans).